Consider the following 278-residue polypeptide: MSSKSQLPFSTRASNHPNPLARKLFEVAEAKKSNVTVSADVTTTKELLDLADRLGPYIAVIKTHIDILSDFGPETINGLNALAEKHNFLIFEDRKFIDIGNTVQKQYHGGALKISEWAHIINCAVLPAEGIVQALAETAQAEDFPHGSERGLLILAEMTSKGSLATGEYTSASVDYARKYPSFVLGFVSTRALTEVSSTVTAADNEDFVVFTTGVNLSSKGDKLGQQYQTPQSAIGRGADFIIAGRGIYTAPDPVEAAKQYQQQGWEAYLARVGGASQ.

Substrate is bound by residues aspartate 40, 62–64, 93–102, tyrosine 228, and arginine 246; these read KTH and DRKFIDIGNT. The Proton donor role is filled by lysine 95.

Belongs to the OMP decarboxylase family.

The catalysed reaction is orotidine 5'-phosphate + H(+) = UMP + CO2. It participates in pyrimidine metabolism; UMP biosynthesis via de novo pathway; UMP from orotate: step 2/2. The polypeptide is Orotidine 5'-phosphate decarboxylase (PYR1) (Passalora fulva (Tomato leaf mold)).